A 336-amino-acid polypeptide reads, in one-letter code: Tryptophan--tRNA ligase (336 aa).

ATP-binding positions include 13–15 and 21–22; these read QPS and GN. The 'HIGH' region motif lies at 14–22; sequence PSGNLTIGN. Asp-140 lines the L-tryptophan pocket. ATP is bound by residues 152-154, Ile-191, and 200-204; these read GQD and KMSKS. The 'KMSKS' region signature appears at 200-204; sequence KMSKS.

Belongs to the class-I aminoacyl-tRNA synthetase family. In terms of assembly, homodimer.

The protein resides in the cytoplasm. The enzyme catalyses tRNA(Trp) + L-tryptophan + ATP = L-tryptophyl-tRNA(Trp) + AMP + diphosphate + H(+). Catalyzes the attachment of tryptophan to tRNA(Trp). The sequence is that of Tryptophan--tRNA ligase from Buchnera aphidicola subsp. Schizaphis graminum (strain Sg).